The following is a 436-amino-acid chain: Methyl-accepting chemotaxis protein Amb0994 (436 aa).

Residues 1–8 (METTLGSY) are Cytoplasmic-facing. The helical transmembrane segment at 9–29 (ARTLSLGMLVPSAICLLAGTF) threads the bilayer. Position 30 (glycine 30) is a topological domain, periplasmic. Residues 31 to 51 (LLGGSSIALWVVIAVSLLGVV) traverse the membrane as a helical segment. The Cytoplasmic segment spans residues 52 to 436 (GGVKIGGSAR…DGFIARIGGR (385 aa)). One can recognise a Methyl-accepting transducer domain in the interval 180 to 416 (AATELEASSG…QVADAASELS (237 aa)). At glutamine 211 the chain carries Glutamate methyl ester (Gln). Position 225 is a glutamate methyl ester (Glu) (glutamate 225). The segment at 321 to 436 (TEDITSQVAH…DGFIARIGGR (116 aa)) is required for interaction with MamK and to respond to the magnetic field.

The protein belongs to the methyl-accepting chemotaxis (MCP) protein family. In terms of assembly, interacts with MamK at cell poles and septa.

It localises to the cell inner membrane. Probable methyl-accepting taxis protein. May be the receptor that senses the torque generated from the interaction between the magnetosome dipole moment and the external magnetic field. Overproduction interferes with magnetotaxis, cells respond more slowly to changes in the magnetic field; requires the MamK-interacting C-terminus of the protein. The effect of magnetic sensing is to control flagellar rotation. Functionally, chemotactic-signal transducers respond to changes in the concentration of attractants and repellents in the environment, transduce a signal from the outside to the inside of the cell, and facilitate sensory adaptation through variation of methylation levels. Attractants increase the level of methylation while repellents decrease the level of methylation. This chain is Methyl-accepting chemotaxis protein Amb0994, found in Paramagnetospirillum magneticum (strain ATCC 700264 / AMB-1) (Magnetospirillum magneticum).